The primary structure comprises 888 residues: Patched domain-containing protein 1 (888 aa).

The helical transmembrane segment at F20–G40 threads the bilayer. Residues N77, N133, and N167 are each glycosylated (N-linked (GlcNAc...) asparagine). In terms of domain architecture, SSD spans S268–F427. The next 2 membrane-spanning stretches (helical) occupy residues V273–V293 and W298–I318. 2 N-linked (GlcNAc...) asparagine glycosylation sites follow: N319 and N326. 4 consecutive transmembrane segments (helical) span residues T328–L348, L373–F393, C407–F427, and P502–V522. 3 N-linked (GlcNAc...) asparagine glycosylation sites follow: N568, N599, and N608. 2 helical membrane-spanning segments follow: residues A707 to I727 and V738 to I758. N762 is a glycosylation site (N-linked (GlcNAc...) asparagine). A helical transmembrane segment spans residues G795–V815. Residue N818 is glycosylated (N-linked (GlcNAc...) asparagine). A helical transmembrane segment spans residues C826 to L846.

It belongs to the patched family. As to expression, widely expressed, including in various regions of the brain with highest expression in the gray and white cerebellum, followed by the cerebellar vermis and the pituitary gland.

The protein resides in the cell membrane. The protein localises to the cell projection. It is found in the dendritic spine. Functionally, required for the development and function of the thalamic reticular nucleus (TRN), a part of the thalamus that is critical for thalamocortical transmission, generation of sleep rhythms, sensorimotor processing and attention. Can bind cholesterol in vitro. The chain is Patched domain-containing protein 1 from Homo sapiens (Human).